Here is a 136-residue protein sequence, read N- to C-terminus: Nucleoside diphosphate kinase (136 aa).

The ATP site is built by lysine 10, phenylalanine 58, arginine 86, threonine 92, arginine 104, and asparagine 114. The active-site Pros-phosphohistidine intermediate is histidine 117.

Belongs to the NDK family. As to quaternary structure, homotetramer. Mg(2+) serves as cofactor.

It localises to the cytoplasm. The enzyme catalyses a 2'-deoxyribonucleoside 5'-diphosphate + ATP = a 2'-deoxyribonucleoside 5'-triphosphate + ADP. The catalysed reaction is a ribonucleoside 5'-diphosphate + ATP = a ribonucleoside 5'-triphosphate + ADP. In terms of biological role, major role in the synthesis of nucleoside triphosphates other than ATP. The ATP gamma phosphate is transferred to the NDP beta phosphate via a ping-pong mechanism, using a phosphorylated active-site intermediate. The protein is Nucleoside diphosphate kinase of Corynebacterium jeikeium (strain K411).